The chain runs to 351 residues: Probable protein phosphatase 2C 41 (351 aa).

Residues 62 to 348 enclose the PPM-type phosphatase domain; the sequence is FTSICSNRGE…DDISVLCLFF (287 aa). Mn(2+) contacts are provided by Asp98, Gly99, Asp293, and Asp339.

It belongs to the PP2C family. Requires Mg(2+) as cofactor. It depends on Mn(2+) as a cofactor.

The catalysed reaction is O-phospho-L-seryl-[protein] + H2O = L-seryl-[protein] + phosphate. The enzyme catalyses O-phospho-L-threonyl-[protein] + H2O = L-threonyl-[protein] + phosphate. This Arabidopsis thaliana (Mouse-ear cress) protein is Probable protein phosphatase 2C 41.